Consider the following 473-residue polypeptide: Flavonol 3-O-glucosyltransferase UGT89B1 (473 aa).

His25 (proton acceptor) is an active-site residue. His25 is a binding site for an anthocyanidin. Residue Asp127 is the Charge relay of the active site. Ala348, Gln350, His365, Trp368, Asn369, Ser370, and Glu373 together coordinate UDP-alpha-D-glucose. Ala388 serves as a coordination point for an anthocyanidin. The UDP-alpha-D-glucose site is built by Asp389 and Gln390.

The protein belongs to the UDP-glycosyltransferase family.

It carries out the reaction a flavonol + UDP-alpha-D-glucose = a flavonol 3-O-beta-D-glucoside + UDP + H(+). The enzyme catalyses a 7-O-hydroxy-flavonol + UDP-alpha-D-glucose = a flavonol 7-O-beta-D-glucoside + UDP + H(+). Possesses quercetin 3-O-glucosyltransferase, 7-O-glucosyltransferase and 4'-O-glucosyltransferase activities in vitro. Also active in vitro on benzoates and benzoate derivatives. In Arabidopsis thaliana (Mouse-ear cress), this protein is Flavonol 3-O-glucosyltransferase UGT89B1.